Consider the following 257-residue polypeptide: MAENTVNAINVDPSEVEKFNKLAGEWWNKTGAFATLHEINPLRLNWIEENVKCGYVSADHQKTAEMGLAGKKVLDVGCGGGILSEAMARRGADVTGIDLGTENLKAASLHAEQSNLQDTLRYQHIPVEALAATHAGQFDVVTCMEMLEHVPDPAAIVDACFKLLAPGGVCVLSTINRNPKSYLFAIVGAEYVLRLLDRGTHDYAKFITPAELDKMAIDAGFTRQDIIGLHYNPLTKRYWLAQNVDVNYMMAVQKPRA.

The S-adenosyl-L-methionine site is built by R43, G77, D98, and M144.

It belongs to the methyltransferase superfamily. UbiG/COQ3 family.

It carries out the reaction a 3-demethylubiquinol + S-adenosyl-L-methionine = a ubiquinol + S-adenosyl-L-homocysteine + H(+). The catalysed reaction is a 3-(all-trans-polyprenyl)benzene-1,2-diol + S-adenosyl-L-methionine = a 2-methoxy-6-(all-trans-polyprenyl)phenol + S-adenosyl-L-homocysteine + H(+). The protein operates within cofactor biosynthesis; ubiquinone biosynthesis. Its function is as follows. O-methyltransferase that catalyzes the 2 O-methylation steps in the ubiquinone biosynthetic pathway. The sequence is that of Ubiquinone biosynthesis O-methyltransferase from Psychrobacter arcticus (strain DSM 17307 / VKM B-2377 / 273-4).